The following is a 308-amino-acid chain: Pantothenate kinase (308 aa).

91–98 serves as a coordination point for ATP; sequence GSVAVGKS.

It belongs to the prokaryotic pantothenate kinase family.

The protein resides in the cytoplasm. It catalyses the reaction (R)-pantothenate + ATP = (R)-4'-phosphopantothenate + ADP + H(+). Its pathway is cofactor biosynthesis; coenzyme A biosynthesis; CoA from (R)-pantothenate: step 1/5. The protein is Pantothenate kinase of Lacticaseibacillus paracasei (strain ATCC 334 / BCRC 17002 / CCUG 31169 / CIP 107868 / KCTC 3260 / NRRL B-441) (Lactobacillus paracasei).